The primary structure comprises 210 residues: Large ribosomal subunit protein uL4 (210 aa).

The segment at 46-89 (QGTASTLTRSEVRGGGRKPYKQKGTGRARQGSIRTPLRPGGGII) is disordered. The span at 60–71 (GGRKPYKQKGTG) shows a compositional bias: basic residues.

This sequence belongs to the universal ribosomal protein uL4 family. As to quaternary structure, part of the 50S ribosomal subunit.

Its function is as follows. One of the primary rRNA binding proteins, this protein initially binds near the 5'-end of the 23S rRNA. It is important during the early stages of 50S assembly. It makes multiple contacts with different domains of the 23S rRNA in the assembled 50S subunit and ribosome. Forms part of the polypeptide exit tunnel. In Prochlorococcus marinus (strain MIT 9312), this protein is Large ribosomal subunit protein uL4.